Reading from the N-terminus, the 259-residue chain is DnaJ homolog subfamily C member 9 (259 aa).

The J domain maps to 15 to 82; that stretch reads DLYQVLGVRR…EQKAVYDEQG (68 aa). Position 109 is a phosphoserine (serine 109). The segment at 171-248 is required for histone binding; it reads EIPAYSAFVK…EAKYCKPSKG (78 aa).

In terms of assembly, forms a co-chaperone complex with MCM2 and histone H3.3-H4 dimers. Within the complex, interacts (via C-terminus) with MCM2 (via N-terminus); the interaction is histone-dependent. Within the complex, interacts (via C-terminus) with histone H3.3-H4 heterodimers; the interaction is direct. Interacts with histones H4, H3.3, H3.2 and H3.1, but not with CENPA or the testis-specific histone H3.1t. Interacts (via J domain) with HSPA1A, HSPA1B and HSPA8. May interact with TONSL; the interaction seems to be histone-dependent. May interact with HSPA8 and BAG2; the interactions seem to be histone-dependent.

The protein localises to the nucleus. It is found in the cytoplasm. It localises to the cell membrane. Acts as a dual histone chaperone and heat shock co-chaperone. As a histone chaperone, forms a co-chaperone complex with MCM2 and histone H3-H4 heterodimers; and may thereby assist MCM2 in histone H3-H4 heterodimer recognition and facilitate the assembly of histones into nucleosomes. May also act as a histone co-chaperone together with TONSL. May recruit histone chaperones ASF1A, NASP and SPT2 to histone H3-H4 heterodimers. Also plays a role as co-chaperone of the HSP70 family of molecular chaperone proteins, such as HSPA1A, HSPA1B and HSPA8. As a co-chaperone, may play a role in the recruitment of HSP70-type molecular chaperone machinery to histone H3-H4 substrates, thereby maintaining the histone structural integrity. Exhibits activity to assemble histones onto DNA in vitro. In Mus musculus (Mouse), this protein is DnaJ homolog subfamily C member 9 (Dnajc9).